We begin with the raw amino-acid sequence, 765 residues long: 5-methyltetrahydropteroyltriglutamate--homocysteine methyltransferase (765 aa).

5-methyltetrahydropteroyltri-L-glutamate contacts are provided by residues 18–21 (REWK) and lysine 114. Residues 437 to 439 (IGS) and glutamate 490 contribute to the L-homocysteine site. L-methionine-binding positions include 437–439 (IGS) and glutamate 490. 5-methyltetrahydropteroyltri-L-glutamate is bound at residue tryptophan 567. Aspartate 605 contributes to the L-homocysteine binding site. L-methionine is bound at residue aspartate 605. Glutamate 611 lines the 5-methyltetrahydropteroyltri-L-glutamate pocket. Positions 647, 649, and 671 each coordinate Zn(2+). The active-site Proton donor is histidine 700. Residue cysteine 732 coordinates Zn(2+).

It belongs to the vitamin-B12 independent methionine synthase family. It depends on Zn(2+) as a cofactor.

It carries out the reaction 5-methyltetrahydropteroyltri-L-glutamate + L-homocysteine = tetrahydropteroyltri-L-glutamate + L-methionine. The protein operates within amino-acid biosynthesis; L-methionine biosynthesis via de novo pathway; L-methionine from L-homocysteine (MetE route): step 1/1. In terms of biological role, catalyzes the transfer of a methyl group from 5-methyltetrahydrofolate to homocysteine resulting in methionine formation. This chain is 5-methyltetrahydropteroyltriglutamate--homocysteine methyltransferase, found in Listeria innocua serovar 6a (strain ATCC BAA-680 / CLIP 11262).